The sequence spans 183 residues: Gamma-crystallin N-A (183 aa).

4 consecutive Beta/gamma crystallin 'Greek key' domains span residues 6–46 (GKIV…RVES), 47–89 (GAWV…KPIK), 95–136 (YRME…KVYG), and 138–180 (GAWA…RRVV).

It belongs to the beta/gamma-crystallin family. In terms of assembly, monomer.

Functionally, crystallins are the dominant structural components of the vertebrate eye lens. This is Gamma-crystallin N-A (crygna) from Danio rerio (Zebrafish).